The following is a 148-amino-acid chain: Putative HTH-type transcriptional regulator NMA1593 (148 aa).

The HTH rrf2-type domain occupies 2–131 (RLTTKGRFAV…GSVTLQSIIE (130 aa)).

This Neisseria meningitidis serogroup A / serotype 4A (strain DSM 15465 / Z2491) protein is Putative HTH-type transcriptional regulator NMA1593.